The primary structure comprises 418 residues: Deoxyribonuclease Tat-D (418 aa).

A divalent metal cation contacts are provided by Glu-185, His-226, His-277, and Asp-327.

The protein belongs to the metallo-dependent hydrolases superfamily. TatD-type hydrolase family. The cofactor is Mg(2+).

The protein resides in the cytoplasm. In terms of biological role, has both endo- and exonuclease activities. Incises double-stranded DNA without obvious specificity via its endonuclease activity and excises the DNA from the 3'-to 5'-end by its exonuclease activity. May have a role in apoptosis. The sequence is that of Deoxyribonuclease Tat-D from Saccharomyces cerevisiae (strain ATCC 204508 / S288c) (Baker's yeast).